A 227-amino-acid chain; its full sequence is MRTDILDRKEEIAQWIAQGKSKAEIARMLSCSSNTLEAYLGKLGIVVIPTNRQYDNKYKSATEYLYNGSPISSYKLKNKILNEGLKPHKCESCGLESWLDKPIPLELEHKDGNHYNNEWDNLALLCPNCHALTPTHAGKNIGRYTERTVNTCAICHCEISSRATHCKSCTPKGITINPDITVEQIEYWVSKYSWIRASKELGLSDTGLRKRYKSLTGKDPKSIKKNR.

In terms of biological role, endonuclease that introduces double-strand break into pseudo palindromic 17 bp DNA sequence yielding 1 bp extensions with 3'-overhangs. This chain is H-N-H endonuclease F-TflIV, found in Escherichia phage T5 (Enterobacteria phage T5).